Here is a 102-residue protein sequence, read N- to C-terminus: Small ribosomal subunit protein uS10 (102 aa).

The protein belongs to the universal ribosomal protein uS10 family. As to quaternary structure, part of the 30S ribosomal subunit.

Its function is as follows. Involved in the binding of tRNA to the ribosomes. This Clavibacter michiganensis subsp. michiganensis (strain NCPPB 382) protein is Small ribosomal subunit protein uS10.